Here is a 364-residue protein sequence, read N- to C-terminus: Aminomethyltransferase (364 aa).

Belongs to the GcvT family. In terms of assembly, the glycine cleavage system is composed of four proteins: P, T, L and H.

The enzyme catalyses N(6)-[(R)-S(8)-aminomethyldihydrolipoyl]-L-lysyl-[protein] + (6S)-5,6,7,8-tetrahydrofolate = N(6)-[(R)-dihydrolipoyl]-L-lysyl-[protein] + (6R)-5,10-methylene-5,6,7,8-tetrahydrofolate + NH4(+). Its function is as follows. The glycine cleavage system catalyzes the degradation of glycine. The polypeptide is Aminomethyltransferase (Photorhabdus laumondii subsp. laumondii (strain DSM 15139 / CIP 105565 / TT01) (Photorhabdus luminescens subsp. laumondii)).